Reading from the N-terminus, the 159-residue chain is Transcription elongation factor GreA (159 aa).

Belongs to the GreA/GreB family.

Functionally, necessary for efficient RNA polymerase transcription elongation past template-encoded arresting sites. The arresting sites in DNA have the property of trapping a certain fraction of elongating RNA polymerases that pass through, resulting in locked ternary complexes. Cleavage of the nascent transcript by cleavage factors such as GreA or GreB allows the resumption of elongation from the new 3'terminus. GreA releases sequences of 2 to 3 nucleotides. This is Transcription elongation factor GreA from Buchnera aphidicola subsp. Baizongia pistaciae (strain Bp).